The following is a 251-amino-acid chain: Cell division protein ZapD (251 aa).

It belongs to the ZapD family. In terms of assembly, interacts with FtsZ.

Its subcellular location is the cytoplasm. Cell division factor that enhances FtsZ-ring assembly. Directly interacts with FtsZ and promotes bundling of FtsZ protofilaments, with a reduction in FtsZ GTPase activity. This Paraburkholderia phymatum (strain DSM 17167 / CIP 108236 / LMG 21445 / STM815) (Burkholderia phymatum) protein is Cell division protein ZapD.